The following is an 83-amino-acid chain: uncharacterized protein (83 aa).

This is an uncharacterized protein from Bacillus anthracis.